A 24-amino-acid chain; its full sequence is Arginine attenuator peptide (24 aa).

This sequence belongs to the arginine attenuator peptide family.

Its function is as follows. Arginine attenuator peptide (AAP) that has a regulatory role in the production of arginine-specific carbamoyl phosphate synthetase. Encoded by an upstream open reading frame (uORF) within the 5'-leader region of arginine-specific carbamoyl phosphate synthetase small chain (arg-2) mRNA, it attenuates the translation of the downstream arg-2 ORF. In the presence of high concentrations of arginine, ribosomes translating the uORF encoding AAP stall at the termination codon, resulting in reduced translation from the downstream arg-2 initiation codon. The polypeptide is Arginine attenuator peptide (Neurospora crassa (strain ATCC 24698 / 74-OR23-1A / CBS 708.71 / DSM 1257 / FGSC 987)).